A 370-amino-acid chain; its full sequence is 3-isopropylmalate dehydrogenase (370 aa).

Position 77 to 90 (77 to 90 (GPKWDSVPYEVRPE)) interacts with NAD(+). Substrate contacts are provided by Arg-97, Arg-107, Arg-135, and Asp-226. 3 residues coordinate Mg(2+): Asp-226, Asp-250, and Asp-254. 290–302 (GSAPDIAGKGIAN) is a binding site for NAD(+).

Belongs to the isocitrate and isopropylmalate dehydrogenases family. LeuB type 1 subfamily. Homodimer. It depends on Mg(2+) as a cofactor. Mn(2+) serves as cofactor.

It is found in the cytoplasm. The enzyme catalyses (2R,3S)-3-isopropylmalate + NAD(+) = 4-methyl-2-oxopentanoate + CO2 + NADH. It functions in the pathway amino-acid biosynthesis; L-leucine biosynthesis; L-leucine from 3-methyl-2-oxobutanoate: step 3/4. Functionally, catalyzes the oxidation of 3-carboxy-2-hydroxy-4-methylpentanoate (3-isopropylmalate) to 3-carboxy-4-methyl-2-oxopentanoate. The product decarboxylates to 4-methyl-2 oxopentanoate. In Brucella melitensis biotype 1 (strain ATCC 23456 / CCUG 17765 / NCTC 10094 / 16M), this protein is 3-isopropylmalate dehydrogenase.